Here is a 158-residue protein sequence, read N- to C-terminus: 2-C-methyl-D-erythritol 2,4-cyclodiphosphate synthase (158 aa).

A divalent metal cation contacts are provided by Asp10 and His12. 4-CDP-2-C-methyl-D-erythritol 2-phosphate is bound by residues 10–12 (DVH) and 36–37 (HS). His44 is an a divalent metal cation binding site. Residues 58 to 60 (DIG), 63 to 67 (FSDTD), and Arg144 contribute to the 4-CDP-2-C-methyl-D-erythritol 2-phosphate site.

This sequence belongs to the IspF family. In terms of assembly, homotrimer. The cofactor is a divalent metal cation.

It carries out the reaction 4-CDP-2-C-methyl-D-erythritol 2-phosphate = 2-C-methyl-D-erythritol 2,4-cyclic diphosphate + CMP. The protein operates within isoprenoid biosynthesis; isopentenyl diphosphate biosynthesis via DXP pathway; isopentenyl diphosphate from 1-deoxy-D-xylulose 5-phosphate: step 4/6. Involved in the biosynthesis of isopentenyl diphosphate (IPP) and dimethylallyl diphosphate (DMAPP), two major building blocks of isoprenoid compounds. Catalyzes the conversion of 4-diphosphocytidyl-2-C-methyl-D-erythritol 2-phosphate (CDP-ME2P) to 2-C-methyl-D-erythritol 2,4-cyclodiphosphate (ME-CPP) with a corresponding release of cytidine 5-monophosphate (CMP). The sequence is that of 2-C-methyl-D-erythritol 2,4-cyclodiphosphate synthase from Burkholderia vietnamiensis (strain G4 / LMG 22486) (Burkholderia cepacia (strain R1808)).